Reading from the N-terminus, the 533-residue chain is CWF19-like protein 1 homolog (533 aa).

Residues 290–314 (EMGGAEDGAGNGRKRHNDGGNDGPR) form a disordered region.

It belongs to the CWF19 family.

This chain is CWF19-like protein 1 homolog, found in Caenorhabditis elegans.